The sequence spans 261 residues: Ribonuclease PH (261 aa).

Phosphate contacts are provided by residues Arg87 and 125 to 127; that span reads GTR.

This sequence belongs to the RNase PH family. In terms of assembly, homohexameric ring arranged as a trimer of dimers.

The enzyme catalyses tRNA(n+1) + phosphate = tRNA(n) + a ribonucleoside 5'-diphosphate. Functionally, phosphorolytic 3'-5' exoribonuclease that plays an important role in tRNA 3'-end maturation. Removes nucleotide residues following the 3'-CCA terminus of tRNAs; can also add nucleotides to the ends of RNA molecules by using nucleoside diphosphates as substrates, but this may not be physiologically important. Probably plays a role in initiation of 16S rRNA degradation (leading to ribosome degradation) during starvation. The chain is Ribonuclease PH from Caldanaerobacter subterraneus subsp. tengcongensis (strain DSM 15242 / JCM 11007 / NBRC 100824 / MB4) (Thermoanaerobacter tengcongensis).